A 364-amino-acid chain; its full sequence is DNA replication and repair protein RecF (364 aa).

30-37 provides a ligand contact to ATP; it reads GENGSGKT.

The protein belongs to the RecF family.

The protein resides in the cytoplasm. Functionally, the RecF protein is involved in DNA metabolism; it is required for DNA replication and normal SOS inducibility. RecF binds preferentially to single-stranded, linear DNA. It also seems to bind ATP. The polypeptide is DNA replication and repair protein RecF (Xylella fastidiosa (strain M12)).